Here is a 513-residue protein sequence, read N- to C-terminus: Na(+)/H(+) antiporter NhaB (513 aa).

11 helical membrane passes run 21–41 (LCIITFLVINPLIYFFVSPFI), 43–63 (GWTLVAEFIFTLSMALKCYPL), 88–108 (IIANFEVILLLMFMVAGIYFM), 137–157 (AAFLSAFLDALTVIAVIISVG), 202–222 (LLMHAAVGSALGGVMTMVGEP), 235–255 (FIEFLIRVAPVSLPVLICGIA), 299–318 (MAIQALAGIWLIVGLALHLA), 322–344 (IIGLTIIIICTAFCGITDEHAIG), 350–370 (PMPFTALIVVFFTIVAVIVDL), 389–409 (LALFYVFNGLLSMISDNVFVG), and 477–497 (MALPYTIVLSIVGFFALEYLL).

It belongs to the NhaB Na(+)/H(+) (TC 2.A.34) antiporter family.

It localises to the cell inner membrane. The enzyme catalyses 2 Na(+)(in) + 3 H(+)(out) = 2 Na(+)(out) + 3 H(+)(in). Its function is as follows. Na(+)/H(+) antiporter that extrudes sodium in exchange for external protons. This is Na(+)/H(+) antiporter NhaB from Haemophilus ducreyi (strain 35000HP / ATCC 700724).